The following is a 158-amino-acid chain: Glycine/sarcosine/betaine reductase complex component A (158 aa).

Residue Sec44 is part of the active site. A non-standard amino acid (selenocysteine) is located at residue Sec44.

It belongs to the GrdA family. Monomer. Component of the glycine, sarcosine and betaine reductase complexes, together with components B and C.

The enzyme catalyses acetyl phosphate + [thioredoxin]-disulfide + NH4(+) + H2O = [thioredoxin]-dithiol + glycine + phosphate + H(+). The catalysed reaction is acetyl phosphate + methylamine + [thioredoxin]-disulfide + H2O = sarcosine + [thioredoxin]-dithiol + phosphate + H(+). It carries out the reaction acetyl phosphate + trimethylamine + [thioredoxin]-disulfide + H2O = glycine betaine + [thioredoxin]-dithiol + phosphate + H(+). In the first step of glycine, betaine and sarcosine reductases, the substrate is bound to component PB via a Schiff base intermediate. Then the PB-activated substrate is nucleophilically attacked by the selenol anion of component PA to transform it to a carboxymethylated selenoether and the respective amine. By action of component PC, acetyl phosphate is formed, leaving component PA in its oxidized state. Finally component PA becomes reduced by the thioredoxin system to start a new catalytic cycle of reductive deamination. The polypeptide is Glycine/sarcosine/betaine reductase complex component A (Clostridium botulinum (strain ATCC 19397 / Type A)).